Here is a 348-residue protein sequence, read N- to C-terminus: Flagellar P-ring protein (348 aa).

An N-terminal signal peptide occupies residues 1 to 16 (MRVLTIFLLFMTSIFA).

The protein belongs to the FlgI family. As to quaternary structure, the basal body constitutes a major portion of the flagellar organelle and consists of four rings (L,P,S, and M) mounted on a central rod.

Its subcellular location is the periplasm. It localises to the bacterial flagellum basal body. Its function is as follows. Assembles around the rod to form the L-ring and probably protects the motor/basal body from shearing forces during rotation. This is Flagellar P-ring protein from Campylobacter jejuni subsp. jejuni serotype O:6 (strain 81116 / NCTC 11828).